Here is a 129-residue protein sequence, read N- to C-terminus: Prefoldin subunit 6 (129 aa).

Ala2 is modified (N-acetylalanine). Lys21 is subject to N6-acetyllysine. Lys66 carries the N6-acetyllysine; alternate modification. Lys66 is covalently cross-linked (Glycyl lysine isopeptide (Lys-Gly) (interchain with G-Cter in SUMO1); alternate). Lys66 participates in a covalent cross-link: Glycyl lysine isopeptide (Lys-Gly) (interchain with G-Cter in SUMO2); alternate.

This sequence belongs to the prefoldin subunit beta family. As to quaternary structure, heterohexamer of two PFD-alpha type and four PFD-beta type subunits. Component of the PAQosome complex which is responsible for the biogenesis of several protein complexes and which consists of R2TP complex members RUVBL1, RUVBL2, RPAP3 and PIH1D1, URI complex members PFDN2, PFDN6, PDRG1, UXT and URI1 as well as ASDURF, POLR2E and DNAAF10/WDR92.

In terms of biological role, binds specifically to cytosolic chaperonin (c-CPN) and transfers target proteins to it. Binds to nascent polypeptide chain and promotes folding in an environment in which there are many competing pathways for nonnative proteins. This is Prefoldin subunit 6 (PFDN6) from Homo sapiens (Human).